The following is a 20-amino-acid chain: Collagenolytic protease 28 kDa (20 aa).

One can recognise a Peptidase S1 domain in the interval 1–20 (IVGGQEASPGSWPXQVGLFF).

It belongs to the peptidase S1 family.

The enzyme catalyses Hydrolysis of proteins, with broad specificity for peptide bonds. Native collagen is cleaved about 75% of the length of the molecule from the N-terminus. Low activity on small molecule substrates of both trypsin and chymotrypsin.. In terms of biological role, this enzyme is a serine protease capable of degrading the native triple helix of collagen. This is Collagenolytic protease 28 kDa from Paralithodes camtschaticus (Red king crab).